The primary structure comprises 329 residues: Probable aryl-alcohol dehydrogenase AAD4 (329 aa).

The Proton donor role is filled by Y30. H105 lines the substrate pocket. An NADP(+)-binding site is contributed by 190-200 (DVMGGGRFQSK).

This sequence belongs to the aldo/keto reductase family. Aldo/keto reductase 2 subfamily.

The sequence is that of Probable aryl-alcohol dehydrogenase AAD4 (AAD4) from Saccharomyces cerevisiae (strain ATCC 204508 / S288c) (Baker's yeast).